A 410-amino-acid polypeptide reads, in one-letter code: Tyrosine--tRNA ligase (410 aa).

An L-tyrosine-binding site is contributed by Y36. A 'HIGH' region motif is present at residues 41 to 50; the sequence is ATADSLTAGH. L-tyrosine contacts are provided by Y169 and Q173. Residues 229–233 carry the 'KMSKS' region motif; that stretch reads KMGKT. ATP is bound at residue K232. One can recognise an S4 RNA-binding domain in the interval 343-409; the sequence is IDLITMMIDA…GKKAYHLFRA (67 aa).

This sequence belongs to the class-I aminoacyl-tRNA synthetase family. TyrS type 1 subfamily. In terms of assembly, homodimer.

The protein localises to the cytoplasm. The enzyme catalyses tRNA(Tyr) + L-tyrosine + ATP = L-tyrosyl-tRNA(Tyr) + AMP + diphosphate + H(+). Catalyzes the attachment of tyrosine to tRNA(Tyr) in a two-step reaction: tyrosine is first activated by ATP to form Tyr-AMP and then transferred to the acceptor end of tRNA(Tyr). The sequence is that of Tyrosine--tRNA ligase from Lachnoclostridium phytofermentans (strain ATCC 700394 / DSM 18823 / ISDg) (Clostridium phytofermentans).